The primary structure comprises 548 residues: Inosine-5'-monophosphate dehydrogenase (548 aa).

CBS domains lie at 121-201 (FILD…EDPV) and 205-261 (MSTE…PLAS). NAD(+)-binding positions include 298–300 (DSS) and 348–350 (GMG). The K(+) site is built by Gly350 and Gly352. Position 353 (Ser353) interacts with IMP. K(+) is bound at residue Cys355. The Thioimidate intermediate role is filled by Cys355. IMP contacts are provided by residues 388–390 (DGG) and 411–412 (GS). Arg461 functions as the Proton acceptor in the catalytic mechanism. Gln473 contacts IMP. Positions 527–548 (ASAQTEGNVHGLHSHEKKLYSS) are disordered. Ser528 is a binding site for K(+). The segment covering 539 to 548 (HSHEKKLYSS) has biased composition (basic and acidic residues).

The protein belongs to the IMPDH/GMPR family. In terms of assembly, homotetramer. Requires K(+) as cofactor.

It is found in the cytoplasm. The enzyme catalyses IMP + NAD(+) + H2O = XMP + NADH + H(+). The protein operates within purine metabolism; XMP biosynthesis via de novo pathway; XMP from IMP: step 1/1. Mycophenolic acid (MPA) is a non-competitive inhibitor that prevents formation of the closed enzyme conformation by binding to the same site as the amobile flap. In contrast, mizoribine monophosphate (MZP) is a competitive inhibitor that induces the closed conformation. MPA is a potent inhibitor of mammalian IMPDHs but a poor inhibitor of the bacterial enzymes. MZP is a more potent inhibitor of bacterial IMPDH. In terms of biological role, catalyzes the conversion of inosine 5'-phosphate (IMP) to xanthosine 5'-phosphate (XMP), the first committed and rate-limiting step in the de novo synthesis of guanine nucleotides, and therefore plays an important role in the regulation of cell growth. Part of the gene cluster that mediates the biosynthesis of mycophenolic acid (MPA), the first isolated antibiotic natural product in the world. Does not play a role in the biosynthesis of MPA, but is involved in self resistance to MPA, since MPA acts as an inhibitor of IMP dehydrogenases. This Penicillium brevicompactum protein is Inosine-5'-monophosphate dehydrogenase.